The following is a 162-amino-acid chain: MDEAYYSGNLESVLGYVSDMHTELASISQLVIAKIETIDNDILNKDIVNFIMCRSNLDNPFISFLDTVYTIIDQEIYQTELINSLDDNEIIDCIVNKFMSFYKDNLENIVDAIITLKYIMNNPDFKTTYAEVLGSRIADIDIKQVIRENILQLSNNIRERYL.

This sequence belongs to the poxviridae A49 protein family.

The polypeptide is Protein A49 (Homo sapiens (Human)).